The sequence spans 293 residues: Triacylglycerol lipase (293 aa).

Residues 10-206 (PILLVHGLFG…YYSWSGIIKG (197 aa)) form the AB hydrolase-1 domain. Leu17 is a binding site for substrate. The active-site Nucleophile is the Ser83. Substrate is bound at residue Gln84. Position 217 (Asp217) interacts with Ca(2+). Catalysis depends on charge relay system residues Asp238 and His260. Positions 262, 266, and 269 each coordinate Ca(2+).

It belongs to the AB hydrolase superfamily. Pseudomonas lipase family. Ca(2+) is required as a cofactor.

The protein localises to the secreted. The catalysed reaction is a triacylglycerol + H2O = a diacylglycerol + a fatty acid + H(+). Catalyzes the hydrolysis of triacylglycerols, with the highest activity with tributyrin (C4), lower activity with tricaprylin (C8), and much lower activity with triacetin (C2), trilaurin (C12) and triolein (C18). The sequence is that of Triacylglycerol lipase (lips) from Pseudomonas fragi.